The chain runs to 266 residues: F-actin-capping protein subunit beta (266 aa).

The protein belongs to the F-actin-capping protein beta subunit family. In terms of assembly, component of the F-actin capping complex, composed of a heterodimer of an alpha and a beta subunit.

It localises to the cytoplasm. It is found in the cytoskeleton. Its subcellular location is the actin patch. F-actin-capping proteins bind in a Ca(2+)-independent manner to the fast growing ends of actin filaments (barbed end) thereby blocking the exchange of subunits at these ends. Unlike other capping proteins (such as gelsolin and severin), these proteins do not sever actin filaments. This chain is F-actin-capping protein subunit beta (cap2), found in Emericella nidulans (strain FGSC A4 / ATCC 38163 / CBS 112.46 / NRRL 194 / M139) (Aspergillus nidulans).